Reading from the N-terminus, the 218-residue chain is Imidazole glycerol phosphate synthase subunit HisH (218 aa).

A Glutamine amidotransferase type-1 domain is found at 5-213 (RLAVIDYEAG…VEFVARCSPL (209 aa)). Catalysis depends on C83, which acts as the Nucleophile. Catalysis depends on residues H188 and E190.

In terms of assembly, heterodimer of HisH and HisF.

The protein resides in the cytoplasm. It catalyses the reaction 5-[(5-phospho-1-deoxy-D-ribulos-1-ylimino)methylamino]-1-(5-phospho-beta-D-ribosyl)imidazole-4-carboxamide + L-glutamine = D-erythro-1-(imidazol-4-yl)glycerol 3-phosphate + 5-amino-1-(5-phospho-beta-D-ribosyl)imidazole-4-carboxamide + L-glutamate + H(+). The enzyme catalyses L-glutamine + H2O = L-glutamate + NH4(+). It participates in amino-acid biosynthesis; L-histidine biosynthesis; L-histidine from 5-phospho-alpha-D-ribose 1-diphosphate: step 5/9. Functionally, IGPS catalyzes the conversion of PRFAR and glutamine to IGP, AICAR and glutamate. The HisH subunit catalyzes the hydrolysis of glutamine to glutamate and ammonia as part of the synthesis of IGP and AICAR. The resulting ammonia molecule is channeled to the active site of HisF. The chain is Imidazole glycerol phosphate synthase subunit HisH from Synechococcus sp. (strain JA-2-3B'a(2-13)) (Cyanobacteria bacterium Yellowstone B-Prime).